Reading from the N-terminus, the 514-residue chain is Alanine--glyoxylate aminotransferase 2, mitochondrial (514 aa).

Residues 1–41 (MTLIWRHLLRPLCLVTPAPRILEMRPFLNLGASWTSVTKLS) constitute a mitochondrion transit peptide. Lys71 carries the post-translational modification N6-acetyllysine; alternate. Position 71 is an N6-succinyllysine; alternate (Lys71). At Lys84 the chain carries N6-acetyllysine. An N6-acetyllysine; alternate modification is found at Lys262. Lys262 is modified (N6-succinyllysine; alternate). Lys304 is modified (N6-succinyllysine). N6-(pyridoxal phosphate)lysine is present on Lys350. Position 420 is an N6-acetyllysine; alternate (Lys420). The residue at position 420 (Lys420) is an N6-succinyllysine; alternate.

Belongs to the class-III pyridoxal-phosphate-dependent aminotransferase family. Homotetramer. The cofactor is pyridoxal 5'-phosphate.

Its subcellular location is the mitochondrion. The enzyme catalyses glyoxylate + L-alanine = glycine + pyruvate. It catalyses the reaction (R)-3-amino-2-methylpropanoate + pyruvate = 2-methyl-3-oxopropanoate + L-alanine. The catalysed reaction is 3-oxopropanoate + L-alanine = beta-alanine + pyruvate. It carries out the reaction 2-oxobutanoate + L-alanine = (2S)-2-aminobutanoate + pyruvate. The enzyme catalyses N(omega),N(omega)-dimethyl-L-arginine + pyruvate = 5-(3,3-dimethylguanidino)-2-oxopentanoate + L-alanine. It catalyses the reaction N(omega),N('omega)-dimethyl-L-arginine + pyruvate = 5-(3,3'-dimethylguanidino)-2-oxopentanoate + L-alanine. The catalysed reaction is N(omega),N(omega)-dimethyl-L-arginine + glyoxylate = 5-(3,3-dimethylguanidino)-2-oxopentanoate + glycine. It carries out the reaction N(omega),N('omega)-dimethyl-L-arginine + glyoxylate = 5-(3,3'-dimethylguanidino)-2-oxopentanoate + glycine. The enzyme catalyses N(omega)-methyl-L-arginine + pyruvate = 5-(3-methylguanidino)-2-oxopentanoate + L-alanine. It catalyses the reaction N(omega)-methyl-L-arginine + glyoxylate = 5-(3-methylguanidino)-2-oxopentanoate + glycine. The catalysed reaction is L-ornithine + pyruvate = 5-amino-2-oxopentanoate + L-alanine. It carries out the reaction L-ornithine + glyoxylate = 5-amino-2-oxopentanoate + glycine. The enzyme catalyses (2S)-2-aminobutanoate + glyoxylate = 2-oxobutanoate + glycine. It catalyses the reaction N(omega),N(omega)-dimethyl-L-arginine + oxaloacetate = 5-(3,3-dimethylguanidino)-2-oxopentanoate + L-aspartate. The catalysed reaction is oxaloacetate + L-alanine = L-aspartate + pyruvate. It carries out the reaction N(omega),N(omega)-dimethyl-L-arginine + 2-oxobutanoate = 5-(3,3-dimethylguanidino)-2-oxopentanoate + (2S)-2-aminobutanoate. The enzyme catalyses 2-oxopentanoate + N(omega),N(omega)-dimethyl-L-arginine = 5-(3,3-dimethylguanidino)-2-oxopentanoate + L-2-aminopentanoate. It catalyses the reaction 2-oxohexanoate + N(omega),N(omega)-dimethyl-L-arginine = L-2-aminohexanoate + 5-(3,3-dimethylguanidino)-2-oxopentanoate. In terms of biological role, multifunctional aminotransferase with a broad substrate specificity. Catalyzes the conversion of glyoxylate to glycine using alanine as the amino donor. Catalyzes metabolism of not L- but the D-isomer of D-beta-aminoisobutyric acid to generate 2-methyl-3-oxopropanoate and alanine. Catalyzes the transfer of the amino group from beta-alanine to pyruvate to yield L-alanine and 3-oxopropanoate. Can metabolize NG-monomethyl-L-arginine (NMMA), asymmetric NG,NG-dimethyl-L-arginine (ADMA) and symmetric NG,N'G-dimethyl-L-arginine (SDMA). ADMA is a potent inhibitor of nitric-oxide (NO) synthase, and this activity provides mechanism through which the kidney regulates blood pressure. The protein is Alanine--glyoxylate aminotransferase 2, mitochondrial (AGXT2) of Pongo abelii (Sumatran orangutan).